Here is an 81-residue protein sequence, read N- to C-terminus: Putative membrane protein insertion efficiency factor (81 aa).

Belongs to the UPF0161 family.

It is found in the cell inner membrane. Functionally, could be involved in insertion of integral membrane proteins into the membrane. This Legionella pneumophila (strain Lens) protein is Putative membrane protein insertion efficiency factor.